Here is a 245-residue protein sequence, read N- to C-terminus: 8-amino-3,8-dideoxy-manno-octulosonate cytidylyltransferase (245 aa).

The protein belongs to the KdsB family.

Its subcellular location is the cytoplasm. The enzyme catalyses 8-amino-3,8-dideoxy-alpha-D-manno-octulosonate + CTP = CMP-8-amino-3,8-dideoxy-alpha-D-manno-oct-2-ulosonate + diphosphate. Its pathway is bacterial outer membrane biogenesis; lipopolysaccharide biosynthesis. Its function is as follows. Activates KDO8N (a required 8-carbon sugar) for incorporation into bacterial lipopolysaccharide in the Shewanella genus. This Shewanella frigidimarina (strain NCIMB 400) protein is 8-amino-3,8-dideoxy-manno-octulosonate cytidylyltransferase.